Reading from the N-terminus, the 537-residue chain is Beta-arabinofuranosyltransferase RAY1 (537 aa).

The short motif at 370 to 372 (DVD) is the DXD motif element.

This sequence belongs to the glycosyltransferase 77 family.

Functionally, beta-arabinofuranosyltransferase that transfers specifically an arabinosyl residue from UDP-arabinofuranose to the monosaccharide galactose or beta-methyl-galactoside in vitro. Catalyzes the addition of a beta-arabinofuranose residue onto a beta-galactosyl residue of an Yariv-precipitable wall polymer in vivo. In Arabidopsis thaliana (Mouse-ear cress), this protein is Beta-arabinofuranosyltransferase RAY1.